The chain runs to 306 residues: Ribonuclease Z (306 aa).

His-63, His-65, Asp-67, His-68, His-141, Asp-211, and His-269 together coordinate Zn(2+). Asp-67 acts as the Proton acceptor in catalysis.

Belongs to the RNase Z family. As to quaternary structure, homodimer. Requires Zn(2+) as cofactor.

It catalyses the reaction Endonucleolytic cleavage of RNA, removing extra 3' nucleotides from tRNA precursor, generating 3' termini of tRNAs. A 3'-hydroxy group is left at the tRNA terminus and a 5'-phosphoryl group is left at the trailer molecule.. In terms of biological role, zinc phosphodiesterase, which displays some tRNA 3'-processing endonuclease activity. Probably involved in tRNA maturation, by removing a 3'-trailer from precursor tRNA. The polypeptide is Ribonuclease Z (Staphylococcus haemolyticus (strain JCSC1435)).